Reading from the N-terminus, the 375-residue chain is Nucleosome assembly protein 1-like 4 (375 aa).

The interval 1-28 is disordered; that stretch reads MAENSLSDGGPADSVEAAKNASNTEKLT. At alanine 2 the chain carries N-acetylalanine. Residues serine 5, serine 7, and serine 49 each carry the phosphoserine modification. Residue threonine 51 is modified to Phosphothreonine. 2 positions are modified to phosphoserine: serine 53 and serine 54. The residue at position 58 (threonine 58) is a Phosphothreonine. Position 105 is an N6-acetyllysine (lysine 105). At serine 125 the chain carries Phosphoserine. Lysine 146 carries the post-translational modification N6-acetyllysine. The Nuclear localization signal motif lies at 265 to 271; that stretch reads IKKKQKH. Residue serine 304 is modified to Phosphoserine. The tract at residues 339 to 375 is disordered; it reads AIEDDDNFEEGEEGEEEELEGDEEGEDEDDADVNPKV.

This sequence belongs to the nucleosome assembly protein (NAP) family. Interacts with core (H2A, H2B, H3, H4) and linker (H1) histones. Post-translationally, polyglutamylated and polyglycylated. These 2 modifications occur exclusively on glutamate residues and result in either polyglutamate or polyglycine chains on the gamma-carboxyl group. Both modifications can coexist on the same protein on adjacent residues, and lowering polyglycylation levels increases polyglutamylation, and reciprocally. Polyglutamylated by TTLL4. Phosphorylated at the G0/G1 boundary but it is not phosphorylated in S-phase. Phosphorylated protein remains in the cytoplasm in a complex with histones during the G0/G1 transition, whereas dephosphorylation triggers its transport into the nucleus at the G1/S-boundary.

It localises to the nucleus. It is found in the cytoplasm. Its function is as follows. Acts as a histone chaperone in nucleosome assembly. In condensing spermatids, mediates the loading of the heterodimer composed of histones H2AB1 and H2BC1/TH2B onto the nucleosomes, thereby promoting the replacement of histones to protamine in male germ cells. The sequence is that of Nucleosome assembly protein 1-like 4 (Nap1l4) from Mus musculus (Mouse).